The chain runs to 461 residues: ATP synthase subunit beta 2 (461 aa).

ATP is bound at residue 151 to 158 (GGAGVGKT).

It belongs to the ATPase alpha/beta chains family. In terms of assembly, F-type ATPases have 2 components, CF(1) - the catalytic core - and CF(0) - the membrane proton channel. CF(1) has five subunits: alpha(3), beta(3), gamma(1), delta(1), epsilon(1). CF(0) has three main subunits: a(1), b(2) and c(9-12). The alpha and beta chains form an alternating ring which encloses part of the gamma chain. CF(1) is attached to CF(0) by a central stalk formed by the gamma and epsilon chains, while a peripheral stalk is formed by the delta and b chains.

The protein resides in the cell inner membrane. The enzyme catalyses ATP + H2O + 4 H(+)(in) = ADP + phosphate + 5 H(+)(out). Its function is as follows. Produces ATP from ADP in the presence of a proton gradient across the membrane. The catalytic sites are hosted primarily by the beta subunits. In Photobacterium profundum (strain SS9), this protein is ATP synthase subunit beta 2.